The following is a 49-amino-acid chain: uncharacterized protein (49 aa).

The N-terminal stretch at 1-22 (MIQKPILLSSFLFLYIRALLHS) is a signal peptide.

This is an uncharacterized protein from Saccharomyces cerevisiae (strain ATCC 204508 / S288c) (Baker's yeast).